The sequence spans 98 residues: NADH-ubiquinone oxidoreductase chain 4L (98 aa).

3 consecutive transmembrane segments (helical) span residues 2-22, 29-49, and 61-81; these read PSISTNITLAFTIALTGMLVF, SLLCLEGMMLAMFILSILFIM, and ILLLVLAACEAAIGLALLVMV.

Belongs to the complex I subunit 4L family. As to quaternary structure, core subunit of respiratory chain NADH dehydrogenase (Complex I) which is composed of 45 different subunits.

The protein resides in the mitochondrion inner membrane. It carries out the reaction a ubiquinone + NADH + 5 H(+)(in) = a ubiquinol + NAD(+) + 4 H(+)(out). Core subunit of the mitochondrial membrane respiratory chain NADH dehydrogenase (Complex I) which catalyzes electron transfer from NADH through the respiratory chain, using ubiquinone as an electron acceptor. Part of the enzyme membrane arm which is embedded in the lipid bilayer and involved in proton translocation. In Lepilemur sahamalazensis (Sahamalaza sportive lemur), this protein is NADH-ubiquinone oxidoreductase chain 4L (MT-ND4L).